Consider the following 557-residue polypeptide: MFS-type transporter clz4 (557 aa).

Transmembrane regions (helical) follow at residues 22-42 (LIIV…DHNG), 59-79 (SITW…VLYG), 89-109 (ALFV…GFAT), 120-140 (LTGA…TDVV), 150-170 (AVVA…AAGV), 179-199 (GLFW…GYIL), 217-237 (WLGS…VSGP), 245-265 (SLLV…FLFI), 269-289 (LATL…SALL), 319-339 (VISG…SMIA), 346-366 (SGQY…GSLL), 379-399 (VIIV…PMVI), 419-439 (FFRF…LQST), and 479-499 (HVYI…FVWK). Over residues 505-523 (SRPTENNDDIEHAPARGIE) the composition is skewed to basic and acidic residues. The interval 505–557 (SRPTENNDDIEHAPARGIEREDEQSSLIYDREPSAVSYGTVEAGEPNRLRRGG) is disordered.

Belongs to the major facilitator superfamily. TCR/Tet family.

The protein resides in the membrane. MFS-type transporter; part of the gene cluster that mediates the biosynthesis of squalestatin S1 (SQS1, also known as zaragozic acid A), a heavily oxidized fungal polyketide that offers potent cholesterol lowering activity by targeting squalene synthase (SS). This is MFS-type transporter clz4 from Cochliobolus lunatus (Filamentous fungus).